We begin with the raw amino-acid sequence, 98 residues long: Acylphosphatase (98 aa).

The Acylphosphatase-like domain occupies 12–98; sequence TYYVRVRGVV…DKRFERFQQH (87 aa). Catalysis depends on residues arginine 27 and asparagine 45.

It belongs to the acylphosphatase family.

It catalyses the reaction an acyl phosphate + H2O = a carboxylate + phosphate + H(+). The protein is Acylphosphatase (acyP) of Burkholderia mallei (strain NCTC 10247).